Here is a 105-residue protein sequence, read N- to C-terminus: Pyruvate synthase subunit PorD (105 aa).

2 consecutive 4Fe-4S ferredoxin-type domains span residues 44–73 (FRPEFKKDKCVRCFLCYIYCPEPAIYLDEE) and 74–103 (GYPVFDYDYCKGCGICANECPTNAIEMVRE). Residues cysteine 53, cysteine 56, cysteine 59, cysteine 63, cysteine 83, cysteine 86, cysteine 89, and cysteine 93 each contribute to the [4Fe-4S] cluster site.

As to quaternary structure, heterotetramer of one alpha, one beta, one delta and one gamma chain. Requires [4Fe-4S] cluster as cofactor.

The sequence is that of Pyruvate synthase subunit PorD (porD) from Pyrococcus abyssi (strain GE5 / Orsay).